A 557-amino-acid polypeptide reads, in one-letter code: Hemolysin transporter protein ShlB (557 aa).

Positions 1–18 (MIKKITALTLLVSTALSA) are cleaved as a signal peptide. The region spanning 79–152 (LPIAGVYLQG…GELGLSVTEG (74 aa)) is the POTRA domain.

This sequence belongs to the TPS (TC 1.B.20) family.

The protein resides in the cell outer membrane. Functionally, interacts with the cell-bound hemolysin. Necessary for the extracellular secretion and activation of hemolysin. Its function is as follows. Member of a two partner secretion pathway (TPS) in which it mediates the secretion of hemolysin. The polypeptide is Hemolysin transporter protein ShlB (shlB) (Serratia marcescens).